The primary structure comprises 405 residues: 2,3-diketo-5-methylthiopentyl-1-phosphate enolase (405 aa).

The active-site Proton acceptor is lysine 91. Substrate is bound by residues lysine 140, 166 to 169 (KDDE), histidine 257, glycine 329, and 351 to 352 (GG). Mg(2+) contacts are provided by lysine 166, aspartate 168, and glutamate 169. Position 166 is an N6-carboxylysine (lysine 166).

It belongs to the RuBisCO large chain family. Type IV subfamily. In terms of assembly, homodimer. It depends on Mg(2+) as a cofactor.

The enzyme catalyses 5-methylsulfanyl-2,3-dioxopentyl phosphate = 2-hydroxy-5-methylsulfanyl-3-oxopent-1-enyl phosphate. The protein operates within amino-acid biosynthesis; L-methionine biosynthesis via salvage pathway; L-methionine from S-methyl-5-thio-alpha-D-ribose 1-phosphate: step 3/6. Catalyzes the enolization of 2,3-diketo-5-methylthiopentyl-1-phosphate (DK-MTP-1-P) into 2-hydroxy-3-keto-5-methylthiopentenyl-1-phosphate (HK-MTPenyl-1-P). The chain is 2,3-diketo-5-methylthiopentyl-1-phosphate enolase from Bacillus licheniformis (strain ATCC 14580 / DSM 13 / JCM 2505 / CCUG 7422 / NBRC 12200 / NCIMB 9375 / NCTC 10341 / NRRL NRS-1264 / Gibson 46).